We begin with the raw amino-acid sequence, 495 residues long: Probable aspartic-type endopeptidase OPSB (495 aa).

A signal peptide spans 1-19 (MRGDSFIWSLATAIPLLST). One can recognise a Peptidase A1 domain in the interval 73-408 (YFCNLTLGTP…DLDNNEISIA (336 aa)). N-linked (GlcNAc...) asparagine glycosylation is present at N76. D91 is a catalytic residue. An N-linked (GlcNAc...) asparagine glycan is attached at N136. Residue D290 is part of the active site. The N-linked (GlcNAc...) asparagine glycan is linked to N413. The segment at 448-470 (TGLPGVETGVPGSRPPSSKAAGQ) is disordered. A467 carries GPI-anchor amidated alanine lipidation. A propeptide spans 468–495 (AGQAKRPDFVLGVAAVGLAGAGMLFAAM) (removed in mature form).

It belongs to the peptidase A1 family.

It localises to the cell membrane. Functionally, probable GPI-anchored aspartic-type endopeptidase which contributes to virulence. This Trichophyton verrucosum (strain HKI 0517) protein is Probable aspartic-type endopeptidase OPSB (OPSB).